The chain runs to 317 residues: 4-hydroxy-3-methylbut-2-enyl diphosphate reductase (317 aa).

Residue cysteine 12 coordinates [4Fe-4S] cluster. Residues histidine 41 and histidine 74 each contribute to the (2E)-4-hydroxy-3-methylbut-2-enyl diphosphate site. The dimethylallyl diphosphate site is built by histidine 41 and histidine 74. The isopentenyl diphosphate site is built by histidine 41 and histidine 74. A [4Fe-4S] cluster-binding site is contributed by cysteine 97. Residue histidine 125 coordinates (2E)-4-hydroxy-3-methylbut-2-enyl diphosphate. Histidine 125 is a dimethylallyl diphosphate binding site. Histidine 125 is an isopentenyl diphosphate binding site. The Proton donor role is filled by glutamate 127. Threonine 168 contributes to the (2E)-4-hydroxy-3-methylbut-2-enyl diphosphate binding site. Cysteine 198 lines the [4Fe-4S] cluster pocket. Residues serine 226, serine 227, asparagine 228, and serine 270 each contribute to the (2E)-4-hydroxy-3-methylbut-2-enyl diphosphate site. Dimethylallyl diphosphate-binding residues include serine 226, serine 227, asparagine 228, and serine 270. Isopentenyl diphosphate contacts are provided by serine 226, serine 227, asparagine 228, and serine 270.

Belongs to the IspH family. As to quaternary structure, homodimer. [4Fe-4S] cluster serves as cofactor.

It catalyses the reaction isopentenyl diphosphate + 2 oxidized [2Fe-2S]-[ferredoxin] + H2O = (2E)-4-hydroxy-3-methylbut-2-enyl diphosphate + 2 reduced [2Fe-2S]-[ferredoxin] + 2 H(+). It carries out the reaction dimethylallyl diphosphate + 2 oxidized [2Fe-2S]-[ferredoxin] + H2O = (2E)-4-hydroxy-3-methylbut-2-enyl diphosphate + 2 reduced [2Fe-2S]-[ferredoxin] + 2 H(+). Its pathway is isoprenoid biosynthesis; dimethylallyl diphosphate biosynthesis; dimethylallyl diphosphate from (2E)-4-hydroxy-3-methylbutenyl diphosphate: step 1/1. It participates in isoprenoid biosynthesis; isopentenyl diphosphate biosynthesis via DXP pathway; isopentenyl diphosphate from 1-deoxy-D-xylulose 5-phosphate: step 6/6. Functionally, catalyzes the conversion of 1-hydroxy-2-methyl-2-(E)-butenyl 4-diphosphate (HMBPP) into a mixture of isopentenyl diphosphate (IPP) and dimethylallyl diphosphate (DMAPP). Acts in the terminal step of the DOXP/MEP pathway for isoprenoid precursor biosynthesis. In Proteus mirabilis (strain HI4320), this protein is 4-hydroxy-3-methylbut-2-enyl diphosphate reductase.